The chain runs to 375 residues: Ornithine transcarbamylase, chloroplastic (375 aa).

The transit peptide at 1–53 (MAAAMASHVSTARSPALSFSSSSSSFFPGTTLRRFSAVSLPSPALPRLRVSCQ) directs the protein to the chloroplast. Ala54 is subject to N-acetylalanine. Carbamoyl phosphate-binding positions include 123 to 126 (SMRT), Arg174, His201, and Gln204. L-ornithine-binding residues include Asn232, Asp293, Ser297, and Met298. The active-site Proton acceptor is Cys333. Residues 333-334 (CL) and Arg361 each bind carbamoyl phosphate.

It belongs to the aspartate/ornithine carbamoyltransferase superfamily. OTCase family.

It localises to the plastid. It is found in the chloroplast. It carries out the reaction carbamoyl phosphate + L-ornithine = L-citrulline + phosphate + H(+). This is Ornithine transcarbamylase, chloroplastic (OTC) from Arabidopsis thaliana (Mouse-ear cress).